A 397-amino-acid polypeptide reads, in one-letter code: Phosphoglycerate kinase (397 aa).

Substrate contacts are provided by residues 21 to 23 (DFN), Arg37, 60 to 63 (HLGR), Arg119, and Arg152. ATP is bound by residues Lys203, Gly294, Glu325, and 354–357 (GGDS).

Belongs to the phosphoglycerate kinase family. As to quaternary structure, monomer.

The protein resides in the cytoplasm. It catalyses the reaction (2R)-3-phosphoglycerate + ATP = (2R)-3-phospho-glyceroyl phosphate + ADP. The protein operates within carbohydrate degradation; glycolysis; pyruvate from D-glyceraldehyde 3-phosphate: step 2/5. The polypeptide is Phosphoglycerate kinase (Prosthecochloris aestuarii (strain DSM 271 / SK 413)).